Here is a 261-residue protein sequence, read N- to C-terminus: Cytochrome c oxidase subunit 3 (261 aa).

Residues 1-15 are Mitochondrial matrix-facing; it reads MTHQTHAYHMVNPSP. A helical transmembrane segment spans residues 16–34; sequence WPLTGALSALLMTSGLIMW. Over 35-40 the chain is Mitochondrial intermembrane; sequence FHFNST. Residues 41–66 traverse the membrane as a helical segment; the sequence is ILLMLGLTTNMLTMYQWWRDIIREST. At 67–72 the chain is on the mitochondrial matrix side; sequence FQGHHT. A helical membrane pass occupies residues 73 to 105; it reads PTVQKGLRYGMILFIISEVLFFTGFFWAFYHSS. At 106 to 128 the chain is on the mitochondrial intermembrane side; that stretch reads LAPTPELGGCWPPTGIHPLNPLE. Residues 129–152 form a helical membrane-spanning segment; that stretch reads VPLLNTSVLLASGVSITWAHHSLM. The Mitochondrial matrix portion of the chain corresponds to 153 to 155; the sequence is EGN. Residues 156 to 183 traverse the membrane as a helical segment; the sequence is RNHMLQALFITIALGVYFTLLQASEYYE. Residues 184–190 are Mitochondrial intermembrane-facing; the sequence is APFTISD. A helical transmembrane segment spans residues 191 to 223; the sequence is GVYGSTFFVATGFHGLHVIIGSTFLIVCFFRQL. At 224–232 the chain is on the mitochondrial matrix side; it reads KFHFTSSHH. A helical membrane pass occupies residues 233-256; sequence FGFEAAAWYWHFVDVVWLFLYVSI. Topologically, residues 257 to 261 are mitochondrial intermembrane; that stretch reads YWWGS.

This sequence belongs to the cytochrome c oxidase subunit 3 family. In terms of assembly, component of the cytochrome c oxidase (complex IV, CIV), a multisubunit enzyme composed of 14 subunits. The complex is composed of a catalytic core of 3 subunits MT-CO1, MT-CO2 and MT-CO3, encoded in the mitochondrial DNA, and 11 supernumerary subunits COX4I, COX5A, COX5B, COX6A, COX6B, COX6C, COX7A, COX7B, COX7C, COX8 and NDUFA4, which are encoded in the nuclear genome. The complex exists as a monomer or a dimer and forms supercomplexes (SCs) in the inner mitochondrial membrane with NADH-ubiquinone oxidoreductase (complex I, CI) and ubiquinol-cytochrome c oxidoreductase (cytochrome b-c1 complex, complex III, CIII), resulting in different assemblies (supercomplex SCI(1)III(2)IV(1) and megacomplex MCI(2)III(2)IV(2)).

The protein localises to the mitochondrion inner membrane. It catalyses the reaction 4 Fe(II)-[cytochrome c] + O2 + 8 H(+)(in) = 4 Fe(III)-[cytochrome c] + 2 H2O + 4 H(+)(out). Functionally, component of the cytochrome c oxidase, the last enzyme in the mitochondrial electron transport chain which drives oxidative phosphorylation. The respiratory chain contains 3 multisubunit complexes succinate dehydrogenase (complex II, CII), ubiquinol-cytochrome c oxidoreductase (cytochrome b-c1 complex, complex III, CIII) and cytochrome c oxidase (complex IV, CIV), that cooperate to transfer electrons derived from NADH and succinate to molecular oxygen, creating an electrochemical gradient over the inner membrane that drives transmembrane transport and the ATP synthase. Cytochrome c oxidase is the component of the respiratory chain that catalyzes the reduction of oxygen to water. Electrons originating from reduced cytochrome c in the intermembrane space (IMS) are transferred via the dinuclear copper A center (CU(A)) of subunit 2 and heme A of subunit 1 to the active site in subunit 1, a binuclear center (BNC) formed by heme A3 and copper B (CU(B)). The BNC reduces molecular oxygen to 2 water molecules using 4 electrons from cytochrome c in the IMS and 4 protons from the mitochondrial matrix. In Aepyceros melampus (Impala), this protein is Cytochrome c oxidase subunit 3 (MT-CO3).